The sequence spans 146 residues: Hemoglobin subunit beta (146 aa).

The region spanning His2–His146 is the Globin domain. His63 and His92 together coordinate heme b.

This sequence belongs to the globin family. As to quaternary structure, heterotetramer of two alpha chains and two beta chains. Red blood cells.

In terms of biological role, involved in oxygen transport from the lung to the various peripheral tissues. The protein is Hemoglobin subunit beta (HBB) of Phoenicopterus ruber (American flamingo).